The sequence spans 123 residues: Large ribosomal subunit protein uL18 (123 aa).

This sequence belongs to the universal ribosomal protein uL18 family. Part of the 50S ribosomal subunit; part of the 5S rRNA/L5/L18/L25 subcomplex. Contacts the 5S and 23S rRNAs.

In terms of biological role, this is one of the proteins that bind and probably mediate the attachment of the 5S RNA into the large ribosomal subunit, where it forms part of the central protuberance. The protein is Large ribosomal subunit protein uL18 of Bifidobacterium animalis subsp. lactis (strain AD011).